Consider the following 409-residue polypeptide: Pentatricopeptide repeat-containing protein At1g01970 (409 aa).

PPR repeat units lie at residues 164–198, 199–233, 234–268, 269–303, 304–338, and 339–373; these read NARD…GFLI, DQVT…GEPL, DYRS…EICA, GREV…GITP, DVKL…GIKA, and TDKC…SIML.

Belongs to the PPR family. P subfamily.

This Arabidopsis thaliana (Mouse-ear cress) protein is Pentatricopeptide repeat-containing protein At1g01970.